Here is a 141-residue protein sequence, read N- to C-terminus: Hemoglobin subunit alpha (141 aa).

The 141-residue stretch at 1–141 (VLSAADKTHV…VSTVLVSKYR (141 aa)) folds into the Globin domain. The residue at position 3 (serine 3) is a Phosphoserine. Position 7 is an N6-succinyllysine (lysine 7). Phosphothreonine is present on threonine 8. Lysine 11 carries the N6-succinyllysine modification. At lysine 16 the chain carries N6-acetyllysine; alternate. Lysine 16 carries the N6-succinyllysine; alternate modification. Phosphoserine is present on serine 35. Lysine 40 carries the post-translational modification N6-succinyllysine. Position 49 is a phosphoserine (serine 49). Histidine 58 contributes to the O2 binding site. A heme b-binding site is contributed by histidine 87. Serine 102 is modified (phosphoserine). Threonine 108 carries the post-translational modification Phosphothreonine. Serine 124 bears the Phosphoserine mark. Phosphothreonine is present on threonine 134. At serine 138 the chain carries Phosphoserine.

It belongs to the globin family. As to quaternary structure, heterotetramer of two alpha chains and two beta chains. As to expression, red blood cells.

In terms of biological role, involved in oxygen transport from the lung to the various peripheral tissues. Its function is as follows. Hemopressin acts as an antagonist peptide of the cannabinoid receptor CNR1. Hemopressin-binding efficiently blocks cannabinoid receptor CNR1 and subsequent signaling. The chain is Hemoglobin subunit alpha (HBA) from Dasypus novemcinctus (Nine-banded armadillo).